A 347-amino-acid chain; its full sequence is Uroporphyrinogen decarboxylase (347 aa).

Residues 36–40 (RQAGR), aspartate 86, tyrosine 160, serine 212, and histidine 326 each bind substrate.

Belongs to the uroporphyrinogen decarboxylase family. Homodimer.

The protein resides in the cytoplasm. It catalyses the reaction uroporphyrinogen III + 4 H(+) = coproporphyrinogen III + 4 CO2. Its pathway is porphyrin-containing compound metabolism; protoporphyrin-IX biosynthesis; coproporphyrinogen-III from 5-aminolevulinate: step 4/4. Functionally, catalyzes the decarboxylation of four acetate groups of uroporphyrinogen-III to yield coproporphyrinogen-III. In Wolbachia sp. subsp. Brugia malayi (strain TRS), this protein is Uroporphyrinogen decarboxylase.